We begin with the raw amino-acid sequence, 198 residues long: MSTSKYPSEIKINPNKGGKAAIERLVEAYGFTTRQALADHLEVSKSTLANRYLRDTFPADWIIQCALETGTSLKWLTTGQGLKQSSLTVATEELPKFRLTAGKMIEDGSYVFDSSFLPANLSSPIVIQDGLVTYICDQKFSEVLDGHWLINIDGTYSIRKITKLPKGMIKITTTENSFECAFSDIEVVACIRSTIVSN.

Belongs to the CI repressor protein family.

The polypeptide is Protein ORFi in retron Ec67 (Escherichia coli).